We begin with the raw amino-acid sequence, 176 residues long: Large ribosomal subunit protein eL20 (176 aa).

Lys-11 is covalently cross-linked (Glycyl lysine isopeptide (Lys-Gly) (interchain with G-Cter in SUMO2)). A Phosphotyrosine modification is found at Tyr-63. Residue Ser-71 is modified to Phosphoserine. Position 76 is an N6-succinyllysine (Lys-76). Position 123 is a phosphoserine (Ser-123). Glycyl lysine isopeptide (Lys-Gly) (interchain with G-Cter in SUMO2) cross-links involve residues Lys-128 and Lys-170.

It belongs to the eukaryotic ribosomal protein eL20 family. Component of the large ribosomal subunit. Binds IPO9 with high affinity.

The protein localises to the cytoplasm. Its function is as follows. Component of the large ribosomal subunit. The ribosome is a large ribonucleoprotein complex responsible for the synthesis of proteins in the cell. The polypeptide is Large ribosomal subunit protein eL20 (RPL18A) (Oryctolagus cuniculus (Rabbit)).